A 61-amino-acid polypeptide reads, in one-letter code: Large ribosomal subunit protein bL32 (61 aa).

The segment covering 1 to 16 (MAVPKRKTSPSKRGMR) has biased composition (basic residues). The interval 1–61 (MAVPKRKTSP…RQVLTPKESA (61 aa)) is disordered. Positions 28–44 (VEDKNSGELRRPHHIDL) are enriched in basic and acidic residues.

Belongs to the bacterial ribosomal protein bL32 family.

This Rhizobium etli (strain CIAT 652) protein is Large ribosomal subunit protein bL32.